The sequence spans 245 residues: Phosphoribosylaminoimidazole-succinocarboxamide synthase (245 aa).

Belongs to the SAICAR synthetase family.

The enzyme catalyses 5-amino-1-(5-phospho-D-ribosyl)imidazole-4-carboxylate + L-aspartate + ATP = (2S)-2-[5-amino-1-(5-phospho-beta-D-ribosyl)imidazole-4-carboxamido]succinate + ADP + phosphate + 2 H(+). The protein operates within purine metabolism; IMP biosynthesis via de novo pathway; 5-amino-1-(5-phospho-D-ribosyl)imidazole-4-carboxamide from 5-amino-1-(5-phospho-D-ribosyl)imidazole-4-carboxylate: step 1/2. The polypeptide is Phosphoribosylaminoimidazole-succinocarboxamide synthase (Acaryochloris marina (strain MBIC 11017)).